Reading from the N-terminus, the 406-residue chain is Arginine biosynthesis bifunctional protein ArgJ (406 aa).

Substrate contacts are provided by Thr-154, Lys-180, Thr-191, Glu-278, Asn-401, and Thr-406. The active-site Nucleophile is Thr-191.

The protein belongs to the ArgJ family. Heterotetramer of two alpha and two beta chains.

It is found in the cytoplasm. The enzyme catalyses N(2)-acetyl-L-ornithine + L-glutamate = N-acetyl-L-glutamate + L-ornithine. It catalyses the reaction L-glutamate + acetyl-CoA = N-acetyl-L-glutamate + CoA + H(+). The protein operates within amino-acid biosynthesis; L-arginine biosynthesis; L-ornithine and N-acetyl-L-glutamate from L-glutamate and N(2)-acetyl-L-ornithine (cyclic): step 1/1. It participates in amino-acid biosynthesis; L-arginine biosynthesis; N(2)-acetyl-L-ornithine from L-glutamate: step 1/4. Catalyzes two activities which are involved in the cyclic version of arginine biosynthesis: the synthesis of N-acetylglutamate from glutamate and acetyl-CoA as the acetyl donor, and of ornithine by transacetylation between N(2)-acetylornithine and glutamate. The polypeptide is Arginine biosynthesis bifunctional protein ArgJ (Gloeobacter violaceus (strain ATCC 29082 / PCC 7421)).